The primary structure comprises 417 residues: Lysosome-associated membrane glycoprotein 1 (417 aa).

An N-terminal signal peptide occupies residues 1–28; it reads MAAPGSARRPLLLLLLLLLLGLMHCASA. The tract at residues 29-194 is first lumenal domain; the sequence is AMFMVKNGNG…SRGETRCEQD (166 aa). At 29–382 the chain is on the lumenal side; sequence AMFMVKNGNG…EECLLDENSM (354 aa). N-linked (GlcNAc...) asparagine glycosylation is found at Asn-37 and Asn-45. An intrachain disulfide couples Cys-41 to Cys-80. Residue Asn-62 is glycosylated (N-linked (GlcNAc...) (polylactosaminoglycan) asparagine). Asn-76, Asn-84, Asn-103, and Asn-107 each carry an N-linked (GlcNAc...) asparagine glycan. Asn-121 and Asn-130 each carry an N-linked (GlcNAc...) (polylactosaminoglycan) asparagine glycan. The cysteines at positions 155 and 191 are disulfide-linked. N-linked (GlcNAc...) asparagine glycans are attached at residues Asn-165 and Asn-181. The tract at residues 184–221 is disordered; that stretch reads FSRGETRCEQDRPSPTTAPPAPPSPSPSPVPKSPSVDK. The hinge stretch occupies residues 195–227; that stretch reads RPSPTTAPPAPPSPSPSPVPKSPSVDKYNVSGT. O-linked (GalNAc...) serine; partial glycosylation occurs at Ser-197. O-linked (GalNAc...) threonine glycosylation is found at Thr-199 and Thr-200. Pro residues predominate over residues 199 to 215; that stretch reads TTAPPAPPSPSPSPVPK. Ser-207, Ser-209, and Ser-211 each carry an O-linked (GalNAc...) serine glycan. Residues Asn-223 and Asn-228 are each glycosylated (N-linked (GlcNAc...) (polylactosaminoglycan) asparagine). The second lumenal domain stretch occupies residues 228–382; that stretch reads NGTCLLASMG…EECLLDENSM (155 aa). A disulfide bridge connects residues Cys-231 and Cys-269. Asn-241, Asn-249, Asn-261, Asn-293, and Asn-322 each carry an N-linked (GlcNAc...) asparagine glycan. Cys-338 and Cys-375 are joined by a disulfide. Residues 383 to 410 form a helical membrane-spanning segment; that stretch reads LIPIAVGGALAGLVLIVLIAYLVGRKRS. The Cytoplasmic portion of the chain corresponds to 411–417; that stretch reads HAGYQTI.

This sequence belongs to the LAMP family. In terms of assembly, interacts with ABCB9; this interaction strongly stabilizes ABCB9 and protects ABCB9 against lysosomal degradation. Interacts with FURIN. Interacts with TMEM175; inhibiting the proton channel activity of TMEM175. (Microbial infection) Interacts with Lassa virus protein glycoprotein. As to quaternary structure, (Microbial infection) Interacts with mumps virus protein F; this interaction promotes protein F cleavage by FURIN. Post-translationally, O- and N-glycosylated; some of the 18 N-linked glycans are polylactosaminoglycans. (Microbial infection) The glycosylation of Asn-76 is essential for Lassa virus entry into cells.

The protein resides in the lysosome membrane. It localises to the endosome membrane. The protein localises to the late endosome membrane. Its subcellular location is the cell membrane. It is found in the cytolytic granule membrane. Lysosomal membrane glycoprotein which plays an important role in lysosome biogenesis, lysosomal pH regulation, autophagy and cholesterol homeostasis. Acts as an important regulator of lysosomal lumen pH regulation by acting as a direct inhibitor of the proton channel TMEM175, facilitating lysosomal acidification for optimal hydrolase activity. Also plays an important role in NK-cells cytotoxicity. Mechanistically, participates in cytotoxic granule movement to the cell surface and perforin trafficking to the lytic granule. In addition, protects NK-cells from degranulation-associated damage induced by their own cytotoxic granule content. Presents carbohydrate ligands to selectins. Its function is as follows. (Microbial infection) Acts as a receptor for Lassa virus glycoprotein. Also promotes fusion of the virus with host membrane in less acidic endosomes. Functionally, (Microbial infection) Supports the FURIN-mediated cleavage of mumps virus fusion protein F by interacting with both FURIN and the unprocessed form but not the processed form of the viral protein F. The sequence is that of Lysosome-associated membrane glycoprotein 1 from Homo sapiens (Human).